The primary structure comprises 367 residues: tRNA 2-selenouridine synthase (367 aa).

The Rhodanese domain maps to 12–135; that stretch reads FLSGVAMLDV…MRGFLIETTD (124 aa). The active-site S-selanylcysteine intermediate is the Cys95.

Belongs to the SelU family. In terms of assembly, monomer.

The catalysed reaction is 5-methylaminomethyl-2-thiouridine(34) in tRNA + selenophosphate + (2E)-geranyl diphosphate + H2O + H(+) = 5-methylaminomethyl-2-selenouridine(34) in tRNA + (2E)-thiogeraniol + phosphate + diphosphate. It catalyses the reaction 5-methylaminomethyl-2-thiouridine(34) in tRNA + (2E)-geranyl diphosphate = 5-methylaminomethyl-S-(2E)-geranyl-thiouridine(34) in tRNA + diphosphate. The enzyme catalyses 5-methylaminomethyl-S-(2E)-geranyl-thiouridine(34) in tRNA + selenophosphate + H(+) = 5-methylaminomethyl-2-(Se-phospho)selenouridine(34) in tRNA + (2E)-thiogeraniol. It carries out the reaction 5-methylaminomethyl-2-(Se-phospho)selenouridine(34) in tRNA + H2O = 5-methylaminomethyl-2-selenouridine(34) in tRNA + phosphate. Its function is as follows. Involved in the post-transcriptional modification of the uridine at the wobble position (U34) of tRNA(Lys), tRNA(Glu) and tRNA(Gln). Catalyzes the conversion of 2-thiouridine (S2U-RNA) to 2-selenouridine (Se2U-RNA). Acts in a two-step process involving geranylation of 2-thiouridine (S2U) to S-geranyl-2-thiouridine (geS2U) and subsequent selenation of the latter derivative to 2-selenouridine (Se2U) in the tRNA chain. The sequence is that of tRNA 2-selenouridine synthase from Cupriavidus necator (strain ATCC 17699 / DSM 428 / KCTC 22496 / NCIMB 10442 / H16 / Stanier 337) (Ralstonia eutropha).